Reading from the N-terminus, the 196-residue chain is Small ribosomal subunit protein uS4c (196 aa).

The disordered stretch occupies residues 22 to 42; the sequence is TRKTPKSGSNPKKKFHSGKKE. Residues 89-169 form the S4 RNA-binding domain; that stretch reads MRLDNILFRL…LPKHLTIDTL (81 aa).

Belongs to the universal ribosomal protein uS4 family. In terms of assembly, part of the 30S ribosomal subunit. Contacts protein S5. The interaction surface between S4 and S5 is involved in control of translational fidelity.

It localises to the plastid. The protein localises to the chloroplast. Its function is as follows. One of the primary rRNA binding proteins, it binds directly to 16S rRNA where it nucleates assembly of the body of the 30S subunit. With S5 and S12 plays an important role in translational accuracy. This Melica altissima (Siberian melic grass) protein is Small ribosomal subunit protein uS4c (rps4).